The chain runs to 152 residues: Large ribosomal subunit protein uL15 (152 aa).

The tract at residues M1 to Q55 is disordered. A compositionally biased stretch (polar residues) spans G28–S42.

This sequence belongs to the universal ribosomal protein uL15 family. Part of the 50S ribosomal subunit.

Binds to the 23S rRNA. This is Large ribosomal subunit protein uL15 from Sulfurihydrogenibium sp. (strain YO3AOP1).